The following is a 477-amino-acid chain: Homeobox protein Meis2 (477 aa).

Residues 71–191 are required for interaction with PBX1; it reads DALKRDKDAI…KMPIDLVIDE (121 aa). One can recognise an MEIS N-terminal domain in the interval 110 to 193; the sequence is GGDVCSSDSF…PIDLVIDERD (84 aa). The span at 193 to 203 shows a compositional bias: basic and acidic residues; sequence DGSSKSDHEEL. The interval 193–283 is disordered; sequence DGSSKSDHEE…KKRQKKRGIF (91 aa). Polar residues-rich tracts occupy residues 204–217 and 239–251; these read SGSS…NPSS and GHAS…SSEQ. A DNA-binding region (homeobox; TALE-type) is located at residues 276–338; sequence RQKKRGIFPK…NARRRIVQPM (63 aa). Residues 299–333 are interaction with DNA; the sequence is LTHPYPSEEQKKQLAQDTGLTILQVNNWFINARRR. A transcriptional activation domain region spans residues 340–477; sequence DQSNRAGFLL…GGQVMDIHAQ (138 aa).

The protein belongs to the TALE/MEIS homeobox family. As to quaternary structure, monomer and homodimer. Heterodimer with HOXB13. Isoform Meis2A interacts with TLX1. Isoform Meis2B interacts with HOXA13 and PBX1 isoform PBX1b. Isoform Meis2D interacts with SP1, SP3 and KLF4. Isoform Meis2D interacts with PBX1 isoform PBX1a; the interaction partially relieves MEIS2 autoinhibition. Isoform Meis2B is part of a PDX1:PBX1b:MEIS2b complex; Meis2B is recruited by PBX1b and can be replaced by isoform Meis2D in a small fraction of complexes. Can form trimeric complexes including HOXB8 and PBX2 or PBX3. As to expression, displays spatially restricted expression patterns in the developing nervous system, limbs, face, and in various viscera. In adult, it is mainly expressed in the brain and female genital tract, with a different distribution of the alternative splice forms in these organs. Lower expression in lung and only basal level in heart, liver, kidney, spleen, and testis. Expressed in pancreatic islets (beta-cells only).

It localises to the nucleus. The protein resides in the cytoplasm. The protein localises to the perinuclear region. Functionally, involved in transcriptional regulation. Binds to HOX or PBX proteins to form dimers, or to a DNA-bound dimer of PBX and HOX proteins and thought to have a role in stabilization of the homeoprotein-DNA complex. Isoform Meis2B is required for the activity of a PDX1:PBX1b:MEIS2b complex in pancreatic acinar cells involved in the transcriptional activation of the ELA1 enhancer; the complex binds to the enhancer B element and cooperates with the transcription factor 1 complex (PTF1) bound to the enhancer A element; MEIS2 is not involved in complex DNA-binding. Probably in complex with PBX1, is involved in transcriptional regulation by KLF4. Isoforms Meis2B and Meis2D can bind to a EPHA8 promoter sequence containing the DNA motif 5'-CGGTCA-3'; in cooperation with a PBX protein (such as PBX2) is proposed to be involved in the transcriptional activation of EPHA8 in the developing midbrain. May be involved in regulation of myeloid differentiation. Can bind to the DNA sequence 5'-TGACAG-3'in the activator ACT sequence of the D(1A) dopamine receptor (DRD1) promoter and activate DRD1 transcription. The chain is Homeobox protein Meis2 (Meis2) from Mus musculus (Mouse).